Reading from the N-terminus, the 436-residue chain is 3-ketoacyl-CoA thiolase (436 aa).

Residue cysteine 99 is the Acyl-thioester intermediate of the active site. Active-site proton acceptor residues include histidine 392 and cysteine 422.

This sequence belongs to the thiolase-like superfamily. Thiolase family. As to quaternary structure, heterotetramer of two alpha chains (FadJ) and two beta chains (FadI).

Its subcellular location is the cytoplasm. The catalysed reaction is an acyl-CoA + acetyl-CoA = a 3-oxoacyl-CoA + CoA. The protein operates within lipid metabolism; fatty acid beta-oxidation. Functionally, catalyzes the final step of fatty acid oxidation in which acetyl-CoA is released and the CoA ester of a fatty acid two carbons shorter is formed. The protein is 3-ketoacyl-CoA thiolase of Pseudoalteromonas translucida (strain TAC 125).